The chain runs to 397 residues: Cathepsin E-A (397 aa).

The first 16 residues, 1 to 16 (MRQILVLLLFATLVYG), serve as a signal peptide directing secretion. A propeptide spans 17–52 (LIRVPLKRQKSIRKTLKEKGKLSHIWTQQGIDMVQY) (activation peptide). Residues 74–385 (YFGEISVGTP…DRGNNRVGLA (312 aa)) form the Peptidase A1 domain. A glycan (N-linked (GlcNAc...) asparagine) is linked at N86. D92 is an active-site residue. The cysteines at positions 105 and 110 are disulfide-linked. N-linked (GlcNAc...) asparagine glycosylation is present at N130. Cysteines 268 and 272 form a disulfide. D277 is a catalytic residue. The cysteines at positions 310 and 344 are disulfide-linked.

Belongs to the peptidase A1 family. Homodimer; disulfide-linked. In terms of processing, glycosylated. Contains high mannose-type oligosaccharide. In terms of tissue distribution, expressed predominantly in the larval foregut and the anterior and posterior adult stomach.

Its subcellular location is the endosome. The enzyme catalyses Similar to cathepsin D, but slightly broader specificity.. In terms of biological role, may have a role in immune function. Probably involved in the processing of antigenic peptides during MHC class II-mediated antigen presentation. The sequence is that of Cathepsin E-A (ctse-a) from Xenopus laevis (African clawed frog).